Consider the following 125-residue polypeptide: MHKSISYGRELRLLTPSHFQTVFSNPPVKAVTAHVTMLATPNELGHPRIGVTVSKKRAKRAVDRNRIKRQIRETFRLRQHKIPAFDIVIIAKQGIVEQDNAALRDTLNYLWRKLAKRCEQYQSRS.

It belongs to the RnpA family. As to quaternary structure, consists of a catalytic RNA component (M1 or rnpB) and a protein subunit.

The enzyme catalyses Endonucleolytic cleavage of RNA, removing 5'-extranucleotides from tRNA precursor.. RNaseP catalyzes the removal of the 5'-leader sequence from pre-tRNA to produce the mature 5'-terminus. It can also cleave other RNA substrates such as 4.5S RNA. The protein component plays an auxiliary but essential role in vivo by binding to the 5'-leader sequence and broadening the substrate specificity of the ribozyme. The chain is Ribonuclease P protein component from Idiomarina loihiensis (strain ATCC BAA-735 / DSM 15497 / L2-TR).